The chain runs to 264 residues: H-2 class II histocompatibility antigen, I-A beta chain (264 aa).

A signal peptide spans 1–31; it reads MVWLPRVPCVAAVILLLTVLSPPVALVRDSR. The interval 32-121 is beta-1; that stretch reads PWFLEYCKSE…IFDNFLVPRR (90 aa). The Extracellular segment spans residues 32–225; it reads PWFLEYCKSE…KAQSTSAQNK (194 aa). Cystine bridges form between Cys-42–Cys-106 and Cys-144–Cys-200. Residue Asn-46 is glycosylated (N-linked (GlcNAc...) asparagine). The segment at 122 to 215 is beta-2; the sequence is VEPTVTVYPT…SLTDPVTVEW (94 aa). The Ig-like C1-type domain occupies 124–214; the sequence is PTVTVYPTKT…PSLTDPVTVE (91 aa). The segment at 216–225 is connecting peptide; the sequence is KAQSTSAQNK. A helical transmembrane segment spans residues 226–248; the sequence is MLSGVGGFVLGLLFLRAGLFIYF. Residues 249-264 are Cytoplasmic-facing; it reads RNQKGQSGLQPTGLLS.

It belongs to the MHC class II family. In terms of processing, ubiquitinated in immature dendritic cells leading to down-regulation of MHC class II.

The protein localises to the membrane. The protein is H-2 class II histocompatibility antigen, I-A beta chain (H2-Eb1) of Mus musculus (Mouse).